Reading from the N-terminus, the 264-residue chain is uncharacterized protein (264 aa).

A helical membrane pass occupies residues 7 to 27 (LTLGICLVLLIILIVGYVIMT).

It belongs to the staphylococcal tandem lipoprotein family.

It localises to the cell membrane. This is an uncharacterized protein from Staphylococcus aureus (strain NCTC 8325 / PS 47).